The sequence spans 234 residues: Purine nucleoside phosphorylase DeoD-type (234 aa).

Position 5 (His-5) interacts with a purine D-ribonucleoside. Residues Gly-21, Arg-25, Arg-44, and 88–91 each bind phosphate; that span reads RIGT. A purine D-ribonucleoside is bound by residues 180 to 182 and 204 to 205; these read DME and SD. Asp-205 (proton donor) is an active-site residue.

Belongs to the PNP/UDP phosphorylase family. As to quaternary structure, homohexamer; trimer of homodimers.

It catalyses the reaction a purine D-ribonucleoside + phosphate = a purine nucleobase + alpha-D-ribose 1-phosphate. The catalysed reaction is a purine 2'-deoxy-D-ribonucleoside + phosphate = a purine nucleobase + 2-deoxy-alpha-D-ribose 1-phosphate. Catalyzes the reversible phosphorolytic breakdown of the N-glycosidic bond in the beta-(deoxy)ribonucleoside molecules, with the formation of the corresponding free purine bases and pentose-1-phosphate. The sequence is that of Purine nucleoside phosphorylase DeoD-type from Buchnera aphidicola subsp. Acyrthosiphon pisum (strain 5A).